A 220-amino-acid polypeptide reads, in one-letter code: Elongation factor Ts, chloroplastic (220 aa).

It belongs to the EF-Ts family.

The protein localises to the plastid. The protein resides in the chloroplast. Its function is as follows. Associates with the EF-Tu.GDP complex and induces the exchange of GDP to GTP. It remains bound to the aminoacyl-tRNA.EF-Tu.GTP complex up to the GTP hydrolysis stage on the ribosome. In Porphyra purpurea (Red seaweed), this protein is Elongation factor Ts, chloroplastic (tsf).